The sequence spans 256 residues: Thiazole synthase (256 aa).

Lys98 functions as the Schiff-base intermediate with DXP in the catalytic mechanism. Residues Gly159, 185 to 186 (AG), and 207 to 208 (NT) each bind 1-deoxy-D-xylulose 5-phosphate.

It belongs to the ThiG family. As to quaternary structure, homotetramer. Forms heterodimers with either ThiH or ThiS.

It is found in the cytoplasm. The catalysed reaction is [ThiS sulfur-carrier protein]-C-terminal-Gly-aminoethanethioate + 2-iminoacetate + 1-deoxy-D-xylulose 5-phosphate = [ThiS sulfur-carrier protein]-C-terminal Gly-Gly + 2-[(2R,5Z)-2-carboxy-4-methylthiazol-5(2H)-ylidene]ethyl phosphate + 2 H2O + H(+). Its pathway is cofactor biosynthesis; thiamine diphosphate biosynthesis. Functionally, catalyzes the rearrangement of 1-deoxy-D-xylulose 5-phosphate (DXP) to produce the thiazole phosphate moiety of thiamine. Sulfur is provided by the thiocarboxylate moiety of the carrier protein ThiS. In vitro, sulfur can be provided by H(2)S. In Aliivibrio fischeri (strain ATCC 700601 / ES114) (Vibrio fischeri), this protein is Thiazole synthase.